The following is a 365-amino-acid chain: PDZ and LIM domain protein 3 (365 aa).

The region spanning 1-84 is the PDZ domain; that stretch reads MPQNVILPGP…QLCLKIDRAE (84 aa). Residue S18 is modified to Phosphoserine. Positions 126–156 are disordered; the sequence is FIIPGRSSGCSTPSGIDGGSGRSTPSSVSTL. Residues 147–156 show a composition bias toward polar residues; it reads RSTPSSVSTL. The LIM zinc-binding domain maps to 293–352; it reads PLCDKCGSGIVGAVVKARDKYRHPECFVCADCNLNLKQKGYFFVEGELYCETHARARMRP.

As to quaternary structure, interacts with ACTN2. Forms a heterodimer with PDLIM4 (via LIM domain).

The protein resides in the cytoplasm. The protein localises to the myofibril. Its subcellular location is the sarcomere. It localises to the z line. In terms of biological role, may play a role in the organization of actin filament arrays within muscle cells. The protein is PDZ and LIM domain protein 3 (PDLIM3) of Sus scrofa (Pig).